Reading from the N-terminus, the 728-residue chain is Ophiobolin F synthase oblA (728 aa).

The (7Z)-ophiobola-7,19-dien-3-ol synthase stretch occupies residues 1-322 (MEYKYSTIVD…RYHFPGRWNE (322 aa)). 2 residues coordinate Mg(2+): Asp93 and Asp97. Asp93 contacts substrate. The DDXXD 1 motif lies at 93–97 (DDEID). Substrate contacts are provided by residues 182-185 (RCMD), Asn226, 230-234 (SYEKE), and 313-314 (RY). Residues 226–234 (NDLFSYEKE) carry the NSE/DTE motif. The geranylfarnesyl diphosphate synthase stretch occupies residues 323–728 (LQKLRAEHGI…LRLMVDMLKV (406 aa)). The segment covering 362–371 (GINGTNGVNG) has biased composition (low complexity). A disordered region spans residues 362 to 394 (GINGTNGVNGKRNRDEDGDENDARINGNGFKKP). The isopentenyl diphosphate site is built by Lys439, Arg442, and His471. The Mg(2+) site is built by Asp478 and Asp482. The DDXXD 2 motif lies at 478 to 482 (DDIED). Arg487 contributes to the dimethylallyl diphosphate binding site. Arg488 is a binding site for isopentenyl diphosphate. Dimethylallyl diphosphate-binding residues include Lys565, Thr566, Gln604, Asn611, Lys621, and Lys631.

In the N-terminal section; belongs to the terpene synthase family. This sequence in the C-terminal section; belongs to the FPP/GGPP synthase family. The cofactor is Mg(2+).

It catalyses the reaction isopentenyl diphosphate + (2E,6E)-farnesyl diphosphate = (2E,6E,10E)-geranylgeranyl diphosphate + diphosphate. It carries out the reaction isopentenyl diphosphate + (2E,6E,10E)-geranylgeranyl diphosphate = (2E,6E,10E,14E)-geranylfarnesyl diphosphate + diphosphate. The enzyme catalyses (2E,6E,10E,14E)-geranylfarnesyl diphosphate + H2O = ophiobolin F + diphosphate. Its pathway is secondary metabolite biosynthesis; terpenoid biosynthesis. Its function is as follows. Bifunctional sesterterpene synthase; part of the gene cluster that mediates the biosynthesis of the sesterterpenes ophiobolins, fungal phytotoxins with potential anti-cancer activities. The first step of the pathway is performed by the sesterterpene synthase oblA that possesses both prenyl transferase and terpene cyclase activity, converting isopentenyl diphosphate and dimethylallyl diphosphate into geranylfarnesyl diphosphate (GFPP) and further converting GFPP into ophiobolin F, respectively. Other sesterterpenoids (C(25) terpenoids) are found as minor products of oblA. The cytochrome P450 monooxygenase oblB then catalyzes a four-step oxidative transformation of ophiobolin F to yield ophiobolin C. The function of the cytochrome P450 monooxygenase oblE has still to be determined. This Emericella variicolor (Aspergillus stellatus) protein is Ophiobolin F synthase oblA.